The sequence spans 256 residues: MNLDALQQRLGYRFSKPELLQQALTHRSHSAQHNERLEFLGDSVLNCAVADMLYGMFGKLDEGDLSRVRANLVKQQALYEIAQMLQLSDTLRLGEGELKSGGFRRPSILADALEAIVGAVFLDAGFDAARALIRKLYIPILEQVDPRTLGKDAKTLLQEYLQGHKIALPQYNVIATHGAAHSQQFEVECTVPKLEVRVFGTGASRRAAEQAAAKLALDEVQKLVPQLLKRSRAERTGKTRKQPVPQDPQLSLRLKE.

The 123-residue stretch at 3–125 folds into the RNase III domain; that stretch reads LDALQQRLGY…IVGAVFLDAG (123 aa). Glutamate 38 provides a ligand contact to Mg(2+). Aspartate 42 is a catalytic residue. Residues aspartate 111 and glutamate 114 each contribute to the Mg(2+) site. The active site involves glutamate 114. The DRBM domain maps to 152–222; that stretch reads DAKTLLQEYL…AKLALDEVQK (71 aa). Residues 230–256 are disordered; that stretch reads RSRAERTGKTRKQPVPQDPQLSLRLKE.

It belongs to the ribonuclease III family. As to quaternary structure, homodimer. Requires Mg(2+) as cofactor.

It is found in the cytoplasm. The enzyme catalyses Endonucleolytic cleavage to 5'-phosphomonoester.. Functionally, digests double-stranded RNA. Involved in the processing of primary rRNA transcript to yield the immediate precursors to the large and small rRNAs (23S and 16S). Processes some mRNAs, and tRNAs when they are encoded in the rRNA operon. Processes pre-crRNA and tracrRNA of type II CRISPR loci if present in the organism. This Cupriavidus necator (strain ATCC 17699 / DSM 428 / KCTC 22496 / NCIMB 10442 / H16 / Stanier 337) (Ralstonia eutropha) protein is Ribonuclease 3.